A 279-amino-acid chain; its full sequence is MSEHFMGLSKIKTESCVHGYESAWLSRWTPSNKNAKEIHLPEDGHLLKESTGPMKLKGKMLTLFPNLDSPVQSVDVIPDMNKEPPIVADRENSIDGEEEEASSQATQSKNVEHFLNNNTNLLRECKRIWSDSETNSRSQVKRLKTNAADNRGNETKNMMVFEEGPSGKKVNHFFHSIFGMTNLGSRRYQKFSTSQNKNLNMGEAEDVNPWIQRWCKRKAADVHEPRGGQEVNSNGTVLEKQQFPSIAAMAMMRKALSGINPTGCRKTNSLFVWNAEDLS.

As to quaternary structure, interacts with light-activated phyB. Binds directly to PIF1 and COP1. Ubiquitinated by COP1 in darkness; this leads to proteasomal degradation. Mainly expressed in cotyledons, hypocotyls, leaves.

Its subcellular location is the nucleus. In terms of biological role, together with PCH1, regulates growth and development adaptation to the ambient environment by controlling negatively phytochrome B (phyB) dark reversion, a temperature-dependent thermal relaxation process during which phyB reverts from the active to the inactive state. Contributes to red (R) light-triggered photomorphogenesis. Promotes various light responses such as seed germination, hypocotyl gravitropism and chlorophyll biosynthesis, via direct interaction with PIF1 and COP1. Prevents DNA-binding ability of PIF1 to negatively regulate the expressions of its target genes. Facilitates the physical interaction between phyB and PIF1 and the subsequent light-induced degradation of PIF1. In Arabidopsis thaliana (Mouse-ear cress), this protein is Protein PHOTOPERIODIC CONTROL OF HYPOCOTYL 1-LIKE.